A 151-amino-acid polypeptide reads, in one-letter code: Deoxyuridine 5'-triphosphate nucleotidohydrolase (151 aa).

Residues 70 to 72 (RSG), Asn-83, 87 to 89 (LID), and Met-97 contribute to the substrate site.

This sequence belongs to the dUTPase family. Mg(2+) serves as cofactor.

It carries out the reaction dUTP + H2O = dUMP + diphosphate + H(+). The protein operates within pyrimidine metabolism; dUMP biosynthesis; dUMP from dCTP (dUTP route): step 2/2. This enzyme is involved in nucleotide metabolism: it produces dUMP, the immediate precursor of thymidine nucleotides and it decreases the intracellular concentration of dUTP so that uracil cannot be incorporated into DNA. In Histophilus somni (strain 129Pt) (Haemophilus somnus), this protein is Deoxyuridine 5'-triphosphate nucleotidohydrolase.